The chain runs to 183 residues: MIIKKPENFNEQIEQFGKCLEKFNKIHSITNYNDLSAVIEDSLEGLKFITEMPKVAIDIGSGAGFPAIFLAMVLPYTKWHLFEPNTKKAAFLTYAKVNLKLKNIIIHNTKIENETPFIADLITSRAVMKVPDLIKISHGFFDTHTKFLFYKGSNVKDELGNLKAEIFENNMRKYALLKGNDVC.

S-adenosyl-L-methionine-binding positions include Gly-60, Phe-65, 111–112 (IE), and Arg-125.

This sequence belongs to the methyltransferase superfamily. RNA methyltransferase RsmG family.

The protein localises to the cytoplasm. It carries out the reaction guanosine(527) in 16S rRNA + S-adenosyl-L-methionine = N(7)-methylguanosine(527) in 16S rRNA + S-adenosyl-L-homocysteine. Functionally, specifically methylates the N7 position of guanine in position 527 of 16S rRNA. This Campylobacter hominis (strain ATCC BAA-381 / DSM 21671 / CCUG 45161 / LMG 19568 / NCTC 13146 / CH001A) protein is Ribosomal RNA small subunit methyltransferase G.